The chain runs to 464 residues: Alpha-2A adrenergic receptor (464 aa).

Residues 1–47 (MFRQEQRWPRQLWPMGSLQPDSGNASWNGTEGPGGGTRATPYSLQVT) are Extracellular-facing. A disordered region spans residues 13-34 (WPMGSLQPDSGNASWNGTEGPG). Positions 19-29 (QPDSGNASWNG) are enriched in polar residues. 2 N-linked (GlcNAc...) asparagine glycosylation sites follow: Asn-24 and Asn-28. A helical membrane pass occupies residues 48–73 (VTLVCLVGLLILLTVFGNVLVIIAVF). Residues 74–84 (TSRALKAPQNL) lie on the Cytoplasmic side of the membrane. Residues 85–110 (FLVSLASADILVATLVIPFSLANEVM) traverse the membrane as a helical segment. At 111–120 (GYWYFGKAWC) the chain is on the extracellular side. An intrachain disulfide couples Cys-120 to Cys-201. Residues 121 to 143 (EIYLALDVLFCTSSIVHLCAISL) traverse the membrane as a helical segment. At 144–163 (DRYWSITQAIEYNLKRTPRR) the chain is on the cytoplasmic side. The helical transmembrane segment at 164 to 187 (IKAIIVTVWVISAVISFPPLISFE) threads the bilayer. Residues 188 to 206 (KAGGGGQQPAEPRCEINDQ) lie on the Extracellular side of the membrane. A helical transmembrane segment spans residues 207–231 (KWYVISSSIGSFFAPCLIMILVYVR). Over 232–388 (IYQIAKRRTR…RQNREKRFTF (157 aa)) the chain is Cytoplasmic. The disordered stretch occupies residues 240 to 378 (TRVPPSRRGP…GGAKASRWRG (139 aa)). The span at 251 to 268 (AHAAAPPGGAERRPNGLG) shows a compositional bias: low complexity. A compositionally biased stretch (basic and acidic residues) spans 312–329 (SSEHAERPPGARRPERGL). At Ser-345 the chain carries Phosphoserine. Over residues 354–363 (AGSGTSGSGP) the composition is skewed to gly residues. At Arg-367 the chain carries Omega-N-methylarginine. The helical transmembrane segment at 389-413 (VLAVVIGVFVVCWFPFFFTYTLTAV) threads the bilayer. Residues 414 to 423 (GCSVPRTLFK) are Extracellular-facing. Residues 424–444 (FFFWFGYCNSSLNPVIYTIFN) form a helical membrane-spanning segment. The Cytoplasmic portion of the chain corresponds to 445 to 464 (HDFRRAFKKILCRGDRKRIV). Residue Cys-456 is the site of S-palmitoyl cysteine attachment.

The protein belongs to the G-protein coupled receptor 1 family. Adrenergic receptor subfamily. ADRA2A sub-subfamily. Component of the ADA2A-containing complex (ATAC), composed of KAT14, KAT2A, TADA2L, TADA3L, ZZ3, MBIP, WDR5, YEATS2, CCDC101 and DR1.

Its subcellular location is the cell membrane. Alpha-2 adrenergic receptors mediate the catecholamine-induced inhibition of adenylate cyclase through the action of G proteins. Component of the ATAC complex, a complex with histone acetyltransferase activity on histones H3 and H4. In Cavia porcellus (Guinea pig), this protein is Alpha-2A adrenergic receptor.